A 258-amino-acid chain; its full sequence is Beta carbonic anhydrase 3 (258 aa).

A signal peptide spans M1 to A28. Residues G24–S54 adopt a coiled-coil conformation. T35 carries the post-translational modification Phosphothreonine. Position 95 is a phosphoserine (S95). At C201 the chain carries S-nitrosocysteine.

The protein belongs to the beta-class carbonic anhydrase family. Strongly expressed in aerial tissues including leaves, stems, flowers and siliques, and, to a lower extent, in roots.

The protein resides in the cytoplasm. The protein localises to the cytosol. It carries out the reaction hydrogencarbonate + H(+) = CO2 + H2O. Its function is as follows. Reversible hydration of carbon dioxide. This Arabidopsis thaliana (Mouse-ear cress) protein is Beta carbonic anhydrase 3 (BCA3).